We begin with the raw amino-acid sequence, 139 residues long: uncharacterized protein (139 aa).

3 helical membrane-spanning segments follow: residues 38–60 (YFLHRMVVCLGVLLCAASLLYVF), 72–94 (FIILRSCVGCSVLLVVACLCAGS), and 114–136 (ITVVALLFGMGALVFNTVVLIVA).

The protein resides in the cell membrane. This is an uncharacterized protein from Treponema pallidum (strain Nichols).